The chain runs to 513 residues: DNA damage-binding protein CMR1 (513 aa).

The span at 35–45 (RSEAGIEDHRK) shows a compositional bias: basic and acidic residues. Positions 35–103 (RSEAGIEDHR…TAQNVKQEEE (69 aa)) are disordered. WD repeat units lie at residues 183-224 (IVHE…PDPE), 237-277 (LFSR…SDEL), 329-369 (LSDK…AKPD), 386-425 (NSRL…PSEL), 438-477 (GRWV…LSHL), and 478-513 (ETST…APQE).

Belongs to the WD repeat DDB2/WDR76 family.

In terms of biological role, DNA-binding protein that binds to both single- and double-stranded DNA. Binds preferentially to UV-damaged DNA. May be involved in DNA-metabolic processes. This Eremothecium gossypii (strain ATCC 10895 / CBS 109.51 / FGSC 9923 / NRRL Y-1056) (Yeast) protein is DNA damage-binding protein CMR1.